Here is a 476-residue protein sequence, read N- to C-terminus: Bifunctional protein HldE (476 aa).

Residues methionine 1–serine 319 form a ribokinase region. Asparagine 195 to glutamate 198 is a binding site for ATP. Aspartate 264 is a catalytic residue. The interval methionine 345–glutamine 476 is cytidylyltransferase.

The protein in the N-terminal section; belongs to the carbohydrate kinase PfkB family. In the C-terminal section; belongs to the cytidylyltransferase family. As to quaternary structure, homodimer.

The enzyme catalyses D-glycero-beta-D-manno-heptose 7-phosphate + ATP = D-glycero-beta-D-manno-heptose 1,7-bisphosphate + ADP + H(+). It catalyses the reaction D-glycero-beta-D-manno-heptose 1-phosphate + ATP + H(+) = ADP-D-glycero-beta-D-manno-heptose + diphosphate. It participates in nucleotide-sugar biosynthesis; ADP-L-glycero-beta-D-manno-heptose biosynthesis; ADP-L-glycero-beta-D-manno-heptose from D-glycero-beta-D-manno-heptose 7-phosphate: step 1/4. It functions in the pathway nucleotide-sugar biosynthesis; ADP-L-glycero-beta-D-manno-heptose biosynthesis; ADP-L-glycero-beta-D-manno-heptose from D-glycero-beta-D-manno-heptose 7-phosphate: step 3/4. In terms of biological role, catalyzes the phosphorylation of D-glycero-D-manno-heptose 7-phosphate at the C-1 position to selectively form D-glycero-beta-D-manno-heptose-1,7-bisphosphate. Its function is as follows. Catalyzes the ADP transfer from ATP to D-glycero-beta-D-manno-heptose 1-phosphate, yielding ADP-D-glycero-beta-D-manno-heptose. The chain is Bifunctional protein HldE from Shewanella sp. (strain W3-18-1).